Reading from the N-terminus, the 185-residue chain is Ribosome maturation factor RimM (185 aa).

One can recognise a PRC barrel domain in the interval D92–F168.

Belongs to the RimM family. In terms of assembly, binds ribosomal protein uS19.

The protein localises to the cytoplasm. Functionally, an accessory protein needed during the final step in the assembly of 30S ribosomal subunit, possibly for assembly of the head region. Essential for efficient processing of 16S rRNA. May be needed both before and after RbfA during the maturation of 16S rRNA. It has affinity for free ribosomal 30S subunits but not for 70S ribosomes. This Xanthobacter autotrophicus (strain ATCC BAA-1158 / Py2) protein is Ribosome maturation factor RimM.